The chain runs to 104 residues: MSAIQGIEGVISLLQATAMSARAQDSLPQPTISFAGQLHAALDRISDTQTAARTQAEKFTLGEPGVALNDVMTDMQKASVSMQMGIQVRNKLVAAYQEVMSMQV.

The protein belongs to the FliE family.

The protein resides in the bacterial flagellum basal body. The polypeptide is Flagellar hook-basal body complex protein FliE (Escherichia coli O139:H28 (strain E24377A / ETEC)).